Consider the following 484-residue polypeptide: Replication-associated protein (484 aa).

Residues Ile-146–Val-153 carry the Nuclear localization signal motif.

The protein localises to the host nucleus. Functionally, plays an essential for the replication of viral DNA. Presumably cleaves viral genomic dsRNA replicative form to initiate rolling circle replication. This Chaetoceros (Chaetoceros sp. DNA virus 7) protein is Replication-associated protein.